Here is an 842-residue protein sequence, read N- to C-terminus: Elongation factor 2 (842 aa).

The tr-type G domain maps to 17–253; it reads TNVRNMSVIA…LWGDSYFNPK (237 aa). GTP is bound by residues 26–33, 158–161, and 213–215; these read AHVDHGKS, NKVD, and SGL. Histidine 699 is modified (diphthamide).

It belongs to the TRAFAC class translation factor GTPase superfamily. Classic translation factor GTPase family. EF-G/EF-2 subfamily.

The protein resides in the cytoplasm. The enzyme catalyses GTP + H2O = GDP + phosphate + H(+). In terms of biological role, catalyzes the GTP-dependent ribosomal translocation step during translation elongation. During this step, the ribosome changes from the pre-translocational (PRE) to the post-translocational (POST) state as the newly formed A-site-bound peptidyl-tRNA and P-site-bound deacylated tRNA move to the P and E sites, respectively. Catalyzes the coordinated movement of the two tRNA molecules, the mRNA and conformational changes in the ribosome. The protein is Elongation factor 2 (EFT1) of Kluyveromyces lactis (strain ATCC 8585 / CBS 2359 / DSM 70799 / NBRC 1267 / NRRL Y-1140 / WM37) (Yeast).